The primary structure comprises 189 residues: Large ribosomal subunit protein bL17 (189 aa).

It belongs to the bacterial ribosomal protein bL17 family. Part of the 50S ribosomal subunit. Contacts protein L32.

In Rhodococcus jostii (strain RHA1), this protein is Large ribosomal subunit protein bL17.